The primary structure comprises 1697 residues: MAFRPFGKDLGPMSSKPAPFTPFGASSTTRLYLSFLFLHTANVGFACSDSSIQPPASQNHSAFAGQSFGPGGIRSGPSIQRAPPLSASQNPQLSIGKPYRPGGVQSVPPINRIPSPSAFQNPSPSSGQPYQPGGIQRIPEPFNGIAWGPEASRTSPSVRPYQFPGVQRPNLNPQYGHDGSRNFLKDHGEHSRATSPPATSHILSRMGTDAVEIGRSQDSKRKSRSDILPDQNMGFSRRNQSPVSGFENGNLVDGFQPLSSRTWMRSPSSAENNPVRSRSNPNQLIHQEQTGNSSFPYAHEVAEIQEATRRKSSAVAPSDKPLGDDPILSQHDSQRFSTSPPTSGTKSYTLSRSSDSQFPGQPSSVNSFNNARKTNSSPATKRTRSPPVYPIEEDIPRNSFPSQDCTEGEEQARAKRLARFKGELEPIADRPVDIQLTKSPVNKTMKPLDNKQTFNSLESSRDALKGDALPDYENSEQPSLIIGVCPDMCPESERGERERKGDLDHYERVDGDRNQTSKSLAVKKYTRTAEREAILIRPMPILQNTMEYLLSLLDRPYNENFLGMYNFLWDRMRAIRMDLRMQHIFNQEAITLLEQMIRLHIIAMHELCEYTKGEGFSEGFDAHLNIEQMNKTSVELFQMYDDHRKKGITVPTEKEFRGYYALLKLDKHPGYKVEPSELSLDLANMTPEIRQTSEVLFARNVARACRTGNFIAFFRLARKASYLQACLMHAHFSKLRTQALASLHSGLQINQGLPVSDMSNWIGMEEEDIEALLEYHGFSIKVFEEPYMVKNDLFLHADKDYKTKCSKLVHMKKSRTIVEDVSAPTVVEDVSTPFPLPSLITEATIGNQQCITAHKHEMPPARSLKKQTSMRLFDKEVADSKTSLLAEEDKPMGTFVMNPPGPFVINPVVHQEKQNDLTSAGGFHSPVKLYSPFGSPKFPQTKSSNLEKQPNDDRIGMSPGEIKFSIIGDVYTNHVPGPALQQSPKSMPMEIMPVTTIAECPTSVENKYALEESVPEAAMICTLEKEFNDIDEEDEDEDGVILNQYDEEVAKAKLKLIIRLWKRWSSRQSELRERRQLAAAAALNSLSLGTPIRFSKTDQSRACGEFNIDQAMRRRFEEREKSWSRLNISDVIADILVGRNPESKCISWKVVLCTQTKSVNSSSSASQVTHSAASRWLSSKLMPHAEHSSLNDDNLLFSAPGVSVWNKWVANGSDIDFTCCLSVARDVEAENDMCETTCGASAVLFLASGGLPLNLQREQLNLILESVPNGSVLPLLVVISSCNGEHMEPDTDIVSGLGLHDIDKSKIASFSIVSIANKSQKGQEVHFFNDSRLRDGFKWLASNSPLQPNLHHVKLRELFLTHFSFSLELLKQMPDQEVGPNICISAFNDALETSRRNITSAAEANPIGWPCPETMLLEDNRKECLMVKRYLPNLDWSSAENVELLSSVLENCKLPDFEDDLTWLTVGCASGAEIENHTQRLEGCLIEYLTQRSNLMGVSLATKETGVMLERNTRLELHNSSRYHITPRWIGIFQRIFNWRIMGLFDASSSSAYVLKSDLNMSTSSYADKFLAEDASYPSCPPNLPLLHEMIEISCSPLKSPPPYDDKAQRVVETGMLIDDHRDIEESMLEKNREACRGIDLMITEDDELGERSWRSKGREAAEKKTIEKRESERLDELLEKCNMVQNSIAEKLCIYF.

4 disordered regions span residues 54 to 134, 167 to 280, 306 to 413, and 491 to 512; these read PPAS…QPGG, QRPN…SRSN, EATR…EQAR, and ESER…VDGD. Positions 120–134 are enriched in low complexity; the sequence is QNPSPSSGQPYQPGG. A compositionally biased stretch (basic and acidic residues) spans 178-192; that stretch reads DGSRNFLKDHGEHSR. Positions 193-202 are enriched in polar residues; the sequence is ATSPPATSHI. Basic and acidic residues predominate over residues 215-227; it reads RSQDSKRKSRSDI. 3 stretches are compositionally biased toward polar residues: residues 233 to 243, 257 to 280, and 335 to 380; these read MGFSRRNQSPV, PLSS…SRSN, and RFST…SPAT. Positions 625 to 813 constitute a PCI domain; sequence NIEQMNKTSV…KCSKLVHMKK (189 aa).

This sequence belongs to the SAC3 family. Interacts with SAC3A, EER5 and CML19. Interacts with UCH1 and UCH2.

The protein resides in the nucleus. In terms of biological role, component of the TREX-2 complex (transcription and export complex 2), a muliprotein complex that functions in docking export-competent ribonucleoprotein particles (mRNPs) to the nuclear entrance of the nuclear pore complex (nuclear basket). TREX-2 participates in mRNA export and accurate chromatin positioning in the nucleus by tethering genes to the nuclear periphery. The sequence is that of SAC3 family protein B from Arabidopsis thaliana (Mouse-ear cress).